Reading from the N-terminus, the 287-residue chain is Beta-lactamase GES-2 (287 aa).

An N-terminal signal peptide occupies residues methionine 1–alanine 18. Residues cysteine 63 and cysteine 233 are joined by a disulfide bond. Serine 64 (nucleophile; acyl-ester intermediate) is an active-site residue. Positions 67, 125, and 161 each coordinate a beta-lactam.

This sequence belongs to the class-A beta-lactamase family.

The enzyme catalyses a beta-lactam + H2O = a substituted beta-amino acid. Inhibited by the beta-lactamase-blocking agents clavulanic acid, sulbactam and tazobactam. In terms of biological role, extended-spectrum beta-lactamase (ESBL) which confers resistance to penicillins, as well as first, third and fourth-generation cephalosporins. Has modest carbapenem-hydrolyzing activity. Has cefotaxime-hydrolyzing activity. This is Beta-lactamase GES-2 from Pseudomonas aeruginosa.